The sequence spans 296 residues: 4-hydroxy-tetrahydrodipicolinate synthase (296 aa).

Pyruvate is bound at residue threonine 44. Tyrosine 132 serves as the catalytic Proton donor/acceptor. Residue lysine 162 is the Schiff-base intermediate with substrate of the active site. Isoleucine 204 is a pyruvate binding site.

Belongs to the DapA family. As to quaternary structure, homotetramer; dimer of dimers.

Its subcellular location is the cytoplasm. The catalysed reaction is L-aspartate 4-semialdehyde + pyruvate = (2S,4S)-4-hydroxy-2,3,4,5-tetrahydrodipicolinate + H2O + H(+). It functions in the pathway amino-acid biosynthesis; L-lysine biosynthesis via DAP pathway; (S)-tetrahydrodipicolinate from L-aspartate: step 3/4. Its function is as follows. Catalyzes the condensation of (S)-aspartate-beta-semialdehyde [(S)-ASA] and pyruvate to 4-hydroxy-tetrahydrodipicolinate (HTPA). This chain is 4-hydroxy-tetrahydrodipicolinate synthase, found in Novosphingobium aromaticivorans (strain ATCC 700278 / DSM 12444 / CCUG 56034 / CIP 105152 / NBRC 16084 / F199).